A 288-amino-acid chain; its full sequence is Thymidylate synthase (288 aa).

Arginine 21 contacts dUMP. Histidine 51 provides a ligand contact to (6R)-5,10-methylene-5,6,7,8-tetrahydrofolate. 150–151 (RR) contacts dUMP. The Nucleophile role is filled by cysteine 170. Residues 190 to 193 (RSGD), asparagine 201, and 231 to 233 (HIY) each bind dUMP. Aspartate 193 serves as a coordination point for (6R)-5,10-methylene-5,6,7,8-tetrahydrofolate. (6R)-5,10-methylene-5,6,7,8-tetrahydrofolate is bound at residue alanine 287.

Belongs to the thymidylate synthase family. Bacterial-type ThyA subfamily. Homodimer.

Its subcellular location is the cytoplasm. The enzyme catalyses dUMP + (6R)-5,10-methylene-5,6,7,8-tetrahydrofolate = 7,8-dihydrofolate + dTMP. Its pathway is pyrimidine metabolism; dTTP biosynthesis. Catalyzes the reductive methylation of 2'-deoxyuridine-5'-monophosphate (dUMP) to 2'-deoxythymidine-5'-monophosphate (dTMP) while utilizing 5,10-methylenetetrahydrofolate (mTHF) as the methyl donor and reductant in the reaction, yielding dihydrofolate (DHF) as a by-product. This enzymatic reaction provides an intracellular de novo source of dTMP, an essential precursor for DNA biosynthesis. This chain is Thymidylate synthase, found in Mycoplasma mobile (strain ATCC 43663 / 163K / NCTC 11711) (Mesomycoplasma mobile).